A 231-amino-acid chain; its full sequence is NADH-ubiquinone oxidoreductase chain 4 (231 aa).

6 helical membrane passes run 1–21, 34–54, 63–85, 89–111, 128–148, and 169–189; these read PIAG…YGII, MFLP…LTCL, IAYS…TPWG, AMAL…NTTY, ILPM…AIPP, and TIIL…HMLL.

The protein belongs to the complex I subunit 4 family.

The protein localises to the mitochondrion membrane. The catalysed reaction is a ubiquinone + NADH + 5 H(+)(in) = a ubiquinol + NAD(+) + 4 H(+)(out). Its function is as follows. Core subunit of the mitochondrial membrane respiratory chain NADH dehydrogenase (Complex I) that is believed to belong to the minimal assembly required for catalysis. Complex I functions in the transfer of electrons from NADH to the respiratory chain. The immediate electron acceptor for the enzyme is believed to be ubiquinone. This chain is NADH-ubiquinone oxidoreductase chain 4 (MT-ND4), found in Bothrops bilineatus (Green jararaca).